A 279-amino-acid polypeptide reads, in one-letter code: Universal stress protein MT2087 (279 aa).

It belongs to the universal stress protein A family.

In Mycobacterium tuberculosis (strain CDC 1551 / Oshkosh), this protein is Universal stress protein MT2087.